A 535-amino-acid chain; its full sequence is CTP synthase (535 aa).

An amidoligase domain region spans residues 1–267 (MTKFIFVTGG…DDIVIKRLDL (267 aa)). Ser-13 lines the CTP pocket. Ser-13 lines the UTP pocket. 14 to 19 (SLGKGI) serves as a coordination point for ATP. Residue Tyr-54 participates in L-glutamine binding. Asp-71 lines the ATP pocket. Mg(2+) is bound by residues Asp-71 and Glu-141. CTP contacts are provided by residues 148-150 (DIE), 188-193 (KTKPTQ), and Lys-224. UTP-binding positions include 188–193 (KTKPTQ) and Lys-224. An ATP-binding site is contributed by 240-242 (RDA). The 243-residue stretch at 293-535 (TIGLVGKYVS…VEAAYKHQNK (243 aa)) folds into the Glutamine amidotransferase type-1 domain. Position 355 (Gly-355) interacts with L-glutamine. Cys-382 (nucleophile; for glutamine hydrolysis) is an active-site residue. Residues 383 to 386 (LGMQ), Glu-406, and Arg-463 each bind L-glutamine. Catalysis depends on residues His-508 and Glu-510.

It belongs to the CTP synthase family. Homotetramer.

The catalysed reaction is UTP + L-glutamine + ATP + H2O = CTP + L-glutamate + ADP + phosphate + 2 H(+). It catalyses the reaction L-glutamine + H2O = L-glutamate + NH4(+). The enzyme catalyses UTP + NH4(+) + ATP = CTP + ADP + phosphate + 2 H(+). Its pathway is pyrimidine metabolism; CTP biosynthesis via de novo pathway; CTP from UDP: step 2/2. With respect to regulation, allosterically activated by GTP, when glutamine is the substrate; GTP has no effect on the reaction when ammonia is the substrate. The allosteric effector GTP functions by stabilizing the protein conformation that binds the tetrahedral intermediate(s) formed during glutamine hydrolysis. Inhibited by the product CTP, via allosteric rather than competitive inhibition. Its function is as follows. Catalyzes the ATP-dependent amination of UTP to CTP with either L-glutamine or ammonia as the source of nitrogen. Regulates intracellular CTP levels through interactions with the four ribonucleotide triphosphates. The protein is CTP synthase of Staphylococcus haemolyticus (strain JCSC1435).